The following is a 388-amino-acid chain: Succinyl-diaminopimelate desuccinylase (388 aa).

Position 84 (His84) interacts with Zn(2+). The active site involves Asp86. Asp115 serves as a coordination point for Zn(2+). Glu146 serves as the catalytic Proton acceptor. Zn(2+)-binding residues include Glu147, Glu175, and His360.

It belongs to the peptidase M20A family. DapE subfamily. As to quaternary structure, homodimer. It depends on Zn(2+) as a cofactor. Co(2+) serves as cofactor.

The catalysed reaction is N-succinyl-(2S,6S)-2,6-diaminopimelate + H2O = (2S,6S)-2,6-diaminopimelate + succinate. Its pathway is amino-acid biosynthesis; L-lysine biosynthesis via DAP pathway; LL-2,6-diaminopimelate from (S)-tetrahydrodipicolinate (succinylase route): step 3/3. In terms of biological role, catalyzes the hydrolysis of N-succinyl-L,L-diaminopimelic acid (SDAP), forming succinate and LL-2,6-diaminopimelate (DAP), an intermediate involved in the bacterial biosynthesis of lysine and meso-diaminopimelic acid, an essential component of bacterial cell walls. The protein is Succinyl-diaminopimelate desuccinylase of Helicobacter pylori (strain J99 / ATCC 700824) (Campylobacter pylori J99).